Reading from the N-terminus, the 384-residue chain is Alpha-2B adrenergic receptor (384 aa).

Residues 1–25 (AIAAVITFLILFTIFGNALVILAVL) traverse the membrane as a helical segment. The Cytoplasmic segment spans residues 26–36 (TSRSLRAPQNL). A helical membrane pass occupies residues 37-62 (FLVSLAAADILVATLIIPFSLANELL). Residues 63-72 (GYWYFRRTWC) lie on the Extracellular side of the membrane. A disulfide bridge connects residues Cys72 and Cys151. The helical transmembrane segment at 73–95 (EVYLALDVLFCTSSIVHLCAISL) threads the bilayer. Topologically, residues 96 to 117 (DRYWAVSRALQYNSKRTPRRIK) are cytoplasmic. The chain crosses the membrane as a helical span at residues 118–140 (CVILTVWLIAAAISLPPLIYKGD). The Extracellular portion of the chain corresponds to 141-156 (QGPQPRGRPQCKLNQE). The chain crosses the membrane as a helical span at residues 157–180 (AWYILSSSIGSFFAPCLIMILVYL). The Cytoplasmic portion of the chain corresponds to 181–348 (RIYLIAKRSN…LTREKRFTFV (168 aa)). The tract at residues 192–289 (RGPRAKGAPR…PEEEEECGSP (98 aa)) is disordered. Residues 218-229 (LANSPTLASSLA) are compositionally biased toward polar residues. Positions 240–249 (PPGEKERETP) are enriched in basic and acidic residues. The helical transmembrane segment at 349-372 (LAVVIGVFVLCWFPFFFSYSLGAI) threads the bilayer. Over 373 to 381 (CPQHCKVPH) the chain is Extracellular. A helical membrane pass occupies residues 382–384 (GLF).

This sequence belongs to the G-protein coupled receptor 1 family. Adrenergic receptor subfamily. ADRA2B sub-subfamily. As to quaternary structure, interacts with RAB26. Interacts with PPP1R9B. Interacts with GGA1, GGA2 and GGA3.

It localises to the cell membrane. Functionally, alpha-2 adrenergic receptors mediate the catecholamine-induced inhibition of adenylate cyclase through the action of G proteins. The chain is Alpha-2B adrenergic receptor (ADRA2B) from Elephas maximus (Indian elephant).